The primary structure comprises 150 residues: Large ribosomal subunit protein bL9 (150 aa).

The protein belongs to the bacterial ribosomal protein bL9 family.

Its function is as follows. Binds to the 23S rRNA. This Desulforudis audaxviator (strain MP104C) protein is Large ribosomal subunit protein bL9.